We begin with the raw amino-acid sequence, 392 residues long: Putative nickel insertion protein (392 aa).

Belongs to the LarC family.

In Methanothrix thermoacetophila (strain DSM 6194 / JCM 14653 / NBRC 101360 / PT) (Methanosaeta thermophila), this protein is Putative nickel insertion protein.